The chain runs to 2437 residues: Polyprotein P1234 (2437 aa).

The 232-residue stretch at 28–259 (EAQQVTPNDH…ESRRLLKSWH (232 aa)) folds into the Alphavirus-like MT domain. The tract at residues 244 to 263 (GSTLYIESRRLLKSWHLPSV) is nsP1 membrane-binding. S-palmitoyl cysteine; by host attachment occurs at residues Cys-417 and Cys-419. The (+)RNA virus helicase ATP-binding domain maps to 691 to 843 (DLINPPFHEF…HNICTEVDHK (153 aa)). 722-729 (GVPGSGKS) contributes to the a ribonucleoside 5'-triphosphate binding site. The (+)RNA virus helicase C-terminal domain maps to 844–992 (SISRRCTLPI…LEDWQREHDT (149 aa)). A Peptidase C9 domain is found at 1005 to 1327 (DVFQNKAKVC…GKLSSIYAGT (323 aa)). The interval 1006 to 1025 (VFQNKAKVCWAKCLVPVLET) is nucleolus localization signal. Catalysis depends on Cys-1014, which acts as the For cysteine protease nsP2 activity. Positions 1059–1068 (TKIYGVDLDS) match the Nuclear export signal motif. His-1084 (for cysteine protease nsP2 activity) is an active-site residue. The short motif at 1182-1186 (PRRKV) is the Nuclear localization signal element. Positions 1335-1493 (APAYAVKRAD…QKIKTVLQNR (159 aa)) constitute a Macro domain. 6 residues coordinate ADP-D-ribose: Asp-1344, Asn-1358, Gly-1366, Gly-1446, Ile-1447, and Phe-1448. 4 residues coordinate Zn(2+): Cys-1596, Cys-1598, Cys-1621, and Cys-1639. Over residues 1675-1684 (TSDSSSLSTF) the composition is skewed to low complexity. Positions 1675–1729 (TSDSSSLSTFPDLESAEELDHDSQSVRPALNEPDDHQPTPTAELATHPVPPPRPN) are disordered. Short sequence motifs (FGDF; binding to host G3BP1) lie at residues 1792 to 1795 (FGAP) and 1804 to 1807 (FGDF). Positions 2191 to 2306 (DHVLETDIAS…HGVVSDKLMA (116 aa)) constitute a RdRp catalytic domain.

Interacts with non-structural protein 3. Interacts with RNA-directed RNA polymerase nsP4. Interacts with protease nsP2. interacts with itself. As to quaternary structure, interacts with mRNA-capping enzyme nsP1. Interacts with host DDX1. Interacts with host DDX3. Interacts (via C-terminus) with host G3BP1; this interaction inhibits the formation of host stress granules on viral mRNAs and the nsp3-G3BP1 complexes bind viral RNAs and probably orchestrate the assembly of viral replication complexes. Interacts (via C-terminus) with host G3BP2; this interaction inhibits the formation of host stress granules on viral mRNAs and the nsp3-G3BP2 complexes bind viral RNAs and probably orchestrate the assembly of viral replication complexes. In terms of assembly, interacts with mRNA-capping enzyme nsP1. Interacts with protease nsP2. interacts with itself. Interacts with RNA-directed RNA polymerase nsP4. Interacts with mRNA-capping enzyme nsP1. Interacts with KPNA1/karyopherin-alpha1; this interaction probably allows the active transport of protease nsP2 into the host nucleus. Interacts with host POLR2A/RPB1; this interaction seems to induce the depletion of host POLR2A and may play a role in the transcriptional shutoff induced by protease nsP2. Interacts with host GTF2E2/TF2E2; this interaction seems to induce the depletion of host GTF2E2/TF2E2 and may play a role in the transcriptional shutoff induced by protease nsP2. The cofactor is Mg(2+). It depends on Mn(2+) as a cofactor. In terms of processing, specific enzymatic cleavages in vivo yield mature proteins. The processing of the polyprotein is temporally regulated. In early stages (1.7 hpi), P1234 is first cleaved in trans through its nsP2 protease activity, releasing P123' and nsP4, which associate to form the early replication complex. At the same time, P1234 is also cut at the nsP1/nsP2 site early in infection but with lower efficiency. After replication of the viral minus-strand RNAs (4 hpi), the polyproteins are cut at the nsP1/nsP2 and nsP2/nsP3 sites very efficiently, preventing accumulation of P123' and P1234 and allowing the formation of the late replication complex. NsP3'/nsP4 site is not cleaved anymore and P34 is produced rather than nsP4. Post-translationally, specific enzymatic cleavages in vivo yield mature proteins. The processing of the polyprotein is temporally regulated. In early stages (1.7 hpi), P123 is cleaved at the nsP1/nsP2 site with low efficiency. After replication of the viral minus-strand RNAs (4 hpi), the polyproteins are cut at the nsP1/nsP2 and nsP2/nsP3 sites very efficiently, preventing accumulation of P123 and allowing the formation of the late replication complex. Specific enzymatic cleavages in vivo yield mature proteins. The processing of the polyprotein is temporally regulated. In early stages (1.7 hpi), P123' is cleaved at the nsP1/nsP2 site with low efficiency. After replication of the viral minus-strand RNAs (4 hpi), the polyproteins are cut at the nsP1/nsP2 and nsP2/nsP3 sites very efficiently, preventing accumulation of P123' and allowing the formation of the late replication complex. In terms of processing, palmitoylated by host palmitoyltransferases ZDHHC2 and ZDHHC19. Post-translationally, phosphorylated by host on serines and threonines. Ubiquitinated; targets the protein for rapid degradation via the ubiquitin system. Nsp4 is present in extremely low quantities due to low frequency of translation through the amber stop-codon and the degradation by the ubiquitin pathway.

It localises to the host cytoplasmic vesicle membrane. The protein localises to the host cell membrane. Its subcellular location is the host cell projection. The protein resides in the host filopodium. It is found in the host nucleus. It localises to the host cytoplasm. It catalyses the reaction GTP + S-adenosyl-L-methionine = N(7)-methyl-GTP + S-adenosyl-L-homocysteine. The catalysed reaction is N(7)-methyl-GTP + L-histidyl-[protein] = N(tele)-(N(7)-methylguanosine 5'-phospho)-L-histidyl-[protein] + diphosphate. It carries out the reaction N(tele)-(N(7)-methylguanosine 5'-phospho)-L-histidyl-[protein] + a 5'-end diphospho-(purine-ribonucleoside) in mRNA + H(+) = a 5'-end (N(7)-methyl 5'-triphosphoguanosine)-(purine-ribonucleoside) in mRNA + L-histidyl-[protein]. The enzyme catalyses a 5'-end triphospho-ribonucleoside in mRNA + H2O = a 5'-end diphospho-ribonucleoside in mRNA + phosphate + H(+). It catalyses the reaction a ribonucleoside 5'-triphosphate + H2O = a ribonucleoside 5'-diphosphate + phosphate + H(+). The catalysed reaction is ATP + H2O = ADP + phosphate + H(+). It carries out the reaction RNA(n) + a ribonucleoside 5'-triphosphate = RNA(n+1) + diphosphate. The enzyme catalyses RNA(n) + ATP = RNA(n)-3'-adenine ribonucleotide + diphosphate. It catalyses the reaction 4-O-(ADP-D-ribosyl)-L-aspartyl-[protein] + H2O = L-aspartyl-[protein] + ADP-D-ribose + H(+). The catalysed reaction is 5-O-(ADP-D-ribosyl)-L-glutamyl-[protein] + H2O = L-glutamyl-[protein] + ADP-D-ribose + H(+). It carries out the reaction ADP-alpha-D-ribose 1''-phosphate + H2O = ADP-D-ribose + phosphate. Its function is as follows. Inactive precursor of the viral replicase, which is activated by cleavages carried out by the viral protease nsP2. In terms of biological role, the early replication complex formed by the polyprotein P123 and nsP4 synthesizes minus-strand RNAs. As soon P123 is cleaved into mature proteins, the plus-strand RNAs synthesis begins. Functionally, the early replication complex formed by the polyprotein P123' and nsP4 synthesizes minus-strand RNAs. Polyprotein P123' is a short-lived polyprotein that accumulates during early stage of infection. As soon P123' is cleaved into mature proteins, the plus-strand RNAs synthesis begins. Cytoplasmic capping enzyme that catalyzes two virus-specific reactions: methyltransferase and nsP1 guanylyltransferase. mRNA-capping is necessary since all viral RNAs are synthesized in the cytoplasm, and host capping enzymes are restricted to the nucleus. The enzymatic reaction involves a covalent link between 7-methyl-GMP and nsP1, whereas eukaryotic capping enzymes form a covalent complex only with GMP. nsP1 capping consists in the following reactions: GTP is first methylated into 7-methyl-GMP and then is covalently linked to nsP1 to form the m7GMp-nsP1 complex from which 7-methyl-GMP complex is transferred to the mRNA to create the cap structure. NsP1 is needed for the initiation of the minus-strand RNAs synthesis. Probably serves as a membrane anchor for the replication complex composed of nsP1-nsP4. Palmitoylated nsP1 is remodeling host cell cytoskeleton, and induces filopodium-like structure formation at the surface of the host cell. Its function is as follows. Multifunctional protein whose N-terminus is part of the RNA polymerase complex and displays NTPase, RNA triphosphatase and helicase activities. NTPase and RNA triphosphatase are involved in viral RNA capping and helicase keeps a check on the dsRNA replication intermediates. The C-terminus harbors a protease that specifically cleaves the polyproteins and releases the mature proteins. Required for the shutoff of minus-strand RNAs synthesis. Specifically inhibits the host IFN response by promoting the nuclear export of host STAT1. Induces host transcription shutoff by inducing rapid proteasome-dependent degradation of POLR2A, a catalytic subunit of the RNAPII complex. The resulting inhibition of cellular protein synthesis serves to ensure maximal viral gene expression and to evade host immune response. In terms of biological role, seems to be essential for minus-strand RNAs and subgenomic 26S mRNAs synthesis. Displays mono-ADP-ribosylhydrolase activity. ADP-ribosylation is a post-translational modification that controls various processes of the host cell and the virus probably needs to revert it for optimal viral replication. Binds proteins of FXR family and sequesters them into the viral RNA replication complexes thereby inhibiting the formation of host stress granules on viral mRNAs. The nsp3'-FXR complexes bind viral RNAs and probably orchestrate the assembly of viral replication complexes, thanks to the ability of FXR family members to self-assemble and bind DNA. Functionally, seems to be essential for minus-strand RNAs and subgenomic 26S mRNAs synthesis. Displays mono-ADP-ribosylhydrolase activity. ADP-ribosylation is a post-translantional modification that controls various processes of the host cell and the virus probably needs to revert it for optimal viral replication. Binds proteins of G3BP family and sequesters them into the viral RNA replication complexes thereby inhibiting the formation of host stress granules on viral mRNAs. The nsp3-G3BP complexes bind viral RNAs and probably orchestrate the assembly of viral replication complexes, thanks to the ability of G3BP family members to self-assemble and bind DNA. RNA dependent RNA polymerase. Replicates genomic and antigenomic RNA by recognizing replications specific signals. The early replication complex formed by the polyprotein P123 and nsP4 synthesizes minus-strand RNAs. The late replication complex composed of fully processed nsP1-nsP4 is responsible for the production of genomic and subgenomic plus-strand RNAs. The core catalytic domain of nsP4 also possesses terminal adenylyltransferase (TATase) activity that is probably involved in maintenance and repair of the poly(A) tail, an element required for replication of the viral genome. The chain is Polyprotein P1234 from Aedes aegypti (Yellowfever mosquito).